The chain runs to 147 residues: NADH-quinone oxidoreductase subunit A (147 aa).

Helical transmembrane passes span Phe16–Phe36, Phe68–Trp88, and Val98–Val118.

Belongs to the complex I subunit 3 family. In terms of assembly, NDH-1 is composed of 13 different subunits. Subunits NuoA, H, J, K, L, M, N constitute the membrane sector of the complex.

The protein resides in the cell inner membrane. It carries out the reaction a quinone + NADH + 5 H(+)(in) = a quinol + NAD(+) + 4 H(+)(out). Functionally, NDH-1 shuttles electrons from NADH, via FMN and iron-sulfur (Fe-S) centers, to quinones in the respiratory chain. The immediate electron acceptor for the enzyme in this species is believed to be ubiquinone. Couples the redox reaction to proton translocation (for every two electrons transferred, four hydrogen ions are translocated across the cytoplasmic membrane), and thus conserves the redox energy in a proton gradient. This is NADH-quinone oxidoreductase subunit A from Citrobacter koseri (strain ATCC BAA-895 / CDC 4225-83 / SGSC4696).